A 209-amino-acid polypeptide reads, in one-letter code: dTTP/UTP pyrophosphatase (209 aa).

The Proton acceptor role is filled by Asp88.

This sequence belongs to the Maf family. YhdE subfamily. A divalent metal cation is required as a cofactor.

It localises to the cytoplasm. The catalysed reaction is dTTP + H2O = dTMP + diphosphate + H(+). The enzyme catalyses UTP + H2O = UMP + diphosphate + H(+). Functionally, nucleoside triphosphate pyrophosphatase that hydrolyzes dTTP and UTP. May have a dual role in cell division arrest and in preventing the incorporation of modified nucleotides into cellular nucleic acids. The protein is dTTP/UTP pyrophosphatase of Burkholderia mallei (strain ATCC 23344).